The chain runs to 1341 residues: Subtilisin-like protease 2 (1341 aa).

Residues 1 to 18 (MLNIIYVVSLILIKFIFY) form the signal peptide. Residues 19–686 (KECNNNNNYY…KLYNNKYSFL (668 aa)) constitute a propeptide, inhibition peptide. Disordered regions lie at residues 85–107 (EKKTKGEENEIEKKKENDLEKKK) and 143–171 (ADVSNNDNSGHEENNKHKLNKKNSSNYKN). N-linked (GlcNAc...) asparagine glycans are attached at residues Asn165, Asn343, Asn449, Asn453, and Asn492. Residues 415–474 (KKSKKEKENTQQKGGNNPNVDINILNNNNNNNNNNNSNNNSNSMNDEEINYNNNNNNKES) are disordered. A compositionally biased stretch (low complexity) spans 430 to 474 (NNPNVDINILNNNNNNNNNNNSNNNSNSMNDEEINYNNNNNNKES). A disordered region spans residues 499 to 530 (IYHNKNDNSYKNKKEGTGKNNDNNDPNNNNNK). Positions 502–515 (NKNDNSYKNKKEGT) are enriched in basic and acidic residues. The segment covering 517–530 (KNNDNNDPNNNNNK) has biased composition (low complexity). 3 N-linked (GlcNAc...) asparagine glycosylation sites follow: Asn550, Asn641, and Asn728. Over 687 to 1136 (NKFLNIEPLI…LYNLYEYDSH (450 aa)) the chain is Extracellular. The Peptidase S8 domain occupies 726 to 1019 (TWNLSIIRVF…DSLVNAEGAV (294 aa)). Catalysis depends on charge relay system residues Asp754 and His797. Residues Asn820, Asn856, Asn892, and Asn950 are each glycosylated (N-linked (GlcNAc...) asparagine). Residue Ser960 is the Charge relay system of the active site. Residues Asn1009 and Asn1105 are each glycosylated (N-linked (GlcNAc...) asparagine). A helical transmembrane segment spans residues 1137 to 1157 (YLLASVILFFLALLSIFVGMI). Over 1158–1341 (YMKSRKHSDK…MNQLDDMFMK (184 aa)) the chain is Cytoplasmic.

Belongs to the peptidase S8 family. Proteolytically cleaved at the N-terminus to generate a 74kDa intermediate which is further processed into a 72kDa form. The first maturation cleavage is autocatalytic, occurs in the ER and is necessary for the subsequent SUB2 trafficking to the microneme. The second cleavage may be mediated by PMX/plasmepsin X.

The protein localises to the cell membrane. It is found in the cytoplasmic vesicle. It localises to the secretory vesicle. The protein resides in the microneme membrane. The catalysed reaction is Hydrolysis of proteins with broad specificity for peptide bonds, and a preference for a large uncharged residue in P1. Hydrolyzes peptide amides.. Activation may be calcium-dependent. Inhibited by the non-covalent interaction with the cleaved propeptide. In terms of biological role, serine protease which plays an essential role in the shedding of AMA1, MSP1 and MSP7 from the surface of the invading merozoite; this step is essential for productive invasion and the release of the adhesion between the erythrocyte and the merozoite. May cleave TRAMP/PTTRAMP, thereby shedding TRAMP from the merozoite surface during erythrocyte invasion. This Plasmodium falciparum (isolate 3D7) protein is Subtilisin-like protease 2.